Reading from the N-terminus, the 417-residue chain is Tyrosine--tRNA ligase (417 aa).

Tyrosine 39 serves as a coordination point for L-tyrosine. The 'HIGH' region signature appears at 44 to 53 (PTAPSLHAGG). L-tyrosine contacts are provided by tyrosine 176 and glutamine 180. The short motif at 236-240 (KMGKS) is the 'KMSKS' region element. Lysine 239 provides a ligand contact to ATP. The S4 RNA-binding domain occupies 350 to 417 (IGVLALMVLA…KKRHVLIRPA (68 aa)).

This sequence belongs to the class-I aminoacyl-tRNA synthetase family. TyrS type 1 subfamily. In terms of assembly, homodimer.

The protein localises to the cytoplasm. The catalysed reaction is tRNA(Tyr) + L-tyrosine + ATP = L-tyrosyl-tRNA(Tyr) + AMP + diphosphate + H(+). In terms of biological role, catalyzes the attachment of tyrosine to tRNA(Tyr) in a two-step reaction: tyrosine is first activated by ATP to form Tyr-AMP and then transferred to the acceptor end of tRNA(Tyr). In Brucella suis biovar 1 (strain 1330), this protein is Tyrosine--tRNA ligase.